Here is a 485-residue protein sequence, read N- to C-terminus: ATP-dependent rRNA helicase RRP3 (485 aa).

The segment covering 1-10 (MPVLKKRKLA) has biased composition (basic residues). Residues 1 to 55 (MPVLKKRKLAHTAQPDPIVSDLESSSSEASQQSHDEQLTAANEQDDESPQVQREE) form a disordered region. Over residues 20-32 (SDLESSSSEASQQ) the composition is skewed to low complexity. Residues 59 to 87 (KSFKDLGIIDSLCEACEALGYKSPTPIQA) carry the Q motif motif. The Helicase ATP-binding domain occupies 90–261 (IPLALQGRDL…RASLSNPLRV (172 aa)). An ATP-binding site is contributed by 103-110 (AETGSGKT). Positions 209–212 (DEAD) match the DEAD box motif. The Helicase C-terminal domain occupies 285-433 (YKDIYLVYLL…EYKVEKEEVM (149 aa)). Over residues 449–458 (EMKDLHEKRG) the composition is skewed to basic and acidic residues. The disordered stretch occupies residues 449–485 (EMKDLHEKRGSRGATLKGRRPAKGAKRGRDEMDREEG). Residues 465-474 (KGRRPAKGAK) are compositionally biased toward basic residues. Residues 475-485 (RGRDEMDREEG) show a composition bias toward basic and acidic residues.

This sequence belongs to the DEAD box helicase family. DDX47/RRP3 subfamily. As to quaternary structure, interacts with the SSU processome.

It is found in the nucleus. The catalysed reaction is ATP + H2O = ADP + phosphate + H(+). Functionally, ATP-dependent rRNA helicase required for pre-ribosomal RNA processing. Involved in the maturation of the 35S-pre-rRNA and to its cleavage to mature 18S rRNA. In Ajellomyces capsulatus (strain NAm1 / WU24) (Darling's disease fungus), this protein is ATP-dependent rRNA helicase RRP3.